A 293-amino-acid polypeptide reads, in one-letter code: Pyridoxal 5'-phosphate synthase subunit PdxS (293 aa).

Position 25 (D25) interacts with D-ribose 5-phosphate. K82 (schiff-base intermediate with D-ribose 5-phosphate) is an active-site residue. D103 contacts D-ribulose 5-phosphate. Residue G154 coordinates D-ribose 5-phosphate. R166 serves as a coordination point for D-glyceraldehyde 3-phosphate. Residues G215 and 236-237 contribute to the D-ribose 5-phosphate site; that span reads GS.

It belongs to the PdxS/SNZ family. In terms of assembly, homohexamer and homododecamer. In the presence of PdxT, forms a dodecamer of heterodimers.

It carries out the reaction aldehydo-D-ribose 5-phosphate + D-glyceraldehyde 3-phosphate + L-glutamine = pyridoxal 5'-phosphate + L-glutamate + phosphate + 3 H2O + H(+). It participates in cofactor biosynthesis; pyridoxal 5'-phosphate biosynthesis. Its function is as follows. Catalyzes the formation of pyridoxal 5'-phosphate from ribose 5-phosphate (RBP), glyceraldehyde 3-phosphate (G3P) and ammonia. The ammonia is provided by the PdxT subunit. Can also use ribulose 5-phosphate and dihydroxyacetone phosphate as substrates, resulting from enzyme-catalyzed isomerization of RBP and G3P, respectively. The chain is Pyridoxal 5'-phosphate synthase subunit PdxS from Thermotoga maritima (strain ATCC 43589 / DSM 3109 / JCM 10099 / NBRC 100826 / MSB8).